A 166-amino-acid chain; its full sequence is Prorelaxin H2 (166 aa).

An N-terminal signal peptide occupies residues 1-5; it reads SRAVA. 3 disulfides stabilise this stretch: C16–C153, C28–C166, and C152–C157. A propeptide spans 37–138 (connecting peptide); the sequence is SLSQEDAPQT…LKYLGLDTHS (102 aa).

Belongs to the insulin family. Heterodimer of a B chain and an A chain linked by two disulfide bonds. As to expression, expressed in the corpus luteum of pregnancy and in the placenta.

Its subcellular location is the secreted. In terms of biological role, relaxin is an ovarian hormone that acts with estrogen to produce dilatation of the birth canal in many mammals. May be involved in remodeling of connective tissues during pregnancy, promoting growth of pubic ligaments and ripening of the cervix. The polypeptide is Prorelaxin H2 (RNL2) (Pan troglodytes (Chimpanzee)).